A 24-amino-acid chain; its full sequence is Humanin-like 6 (24 aa).

This sequence belongs to the humanin family. Expressed in skeletal muscle and testis.

It localises to the secreted. Its subcellular location is the cytoplasm. Functionally, plays a role as a neuroprotective and antiapoptotic factor. In Homo sapiens (Human), this protein is Humanin-like 6.